Here is a 297-residue protein sequence, read N- to C-terminus: uncharacterized protein (297 aa).

Residues 1–60 (MNIELRHLRYFVAVAEELHFGRAAARLNISQPPLSQQIQALEQQIGARLLARTNRSVLLT) enclose the HTH lysR-type domain. The H-T-H motif DNA-binding region spans 20–40 (FGRAAARLNISQPPLSQQIQA).

Belongs to the LysR transcriptional regulatory family.

This is an uncharacterized protein from Escherichia coli (strain K12).